The chain runs to 142 residues: Rhinocerosin (142 aa).

The signal sequence occupies residues 1–16 (MMKLYIVFGFIAFSAA). Residues 17-70 (YVVPEGYYEPEYYPADGYESERVARASPAELIFDEDLADEPEVEEPQYYIRTRR) constitute a propeptide that is removed on maturation. Residues 72-96 (LQPGAPNFPMPGSQLPTSITSNIEK) are disordered. The segment covering 85–96 (QLPTSITSNIEK) has biased composition (polar residues).

The protein belongs to the coleoptericin family. As to expression, strongly expressed in the fat body and the Malpighian tubules, and weakly expressed in hemocytes and midgut.

Its subcellular location is the secreted. Functionally, has strong antibacterial activity against E.coli, Streptococcus pyogenes, Staphylococcus aureus but not against Pseudomonas aeruginosa. In Oryctes rhinoceros (Coconut rhinoceros beetle), this protein is Rhinocerosin.